The chain runs to 244 residues: Haloacid dehalogenase-like hydrolase domain-containing protein 3 (244 aa).

This sequence belongs to the HAD-like hydrolase superfamily.

This Xenopus laevis (African clawed frog) protein is Haloacid dehalogenase-like hydrolase domain-containing protein 3 (hdhd3).